The sequence spans 264 residues: MERAIGVIDSGVGGLTVAKEIMRQLPKEQIIYLGDTARCPYGPRPVEEVRRFTWQMIDYLRQYPLKMLVIACNTATAVALDDVRAKLDIPVLGVIHPGARAALKATRRGHIGVIGTIGTIRSRAYEKALQSINPRVQVESLACPKFVPLVESGDFEGQEAMAIVAESLAPLRPLPIDVLILGCTHYPLLAPLIRTYMGKRVKLICSGGETAREVSAILHHSQLLYTGEREPEHLFFTTGPKELFEKISGKWFGKPIGTVEAIRL.

Substrate is bound by residues 9-10 (DS) and 41-42 (YG). C72 serves as the catalytic Proton donor/acceptor. Substrate is bound at residue 73–74 (NT). C183 serves as the catalytic Proton donor/acceptor. 184–185 (TH) lines the substrate pocket.

This sequence belongs to the aspartate/glutamate racemases family.

The enzyme catalyses L-glutamate = D-glutamate. Its pathway is cell wall biogenesis; peptidoglycan biosynthesis. Its function is as follows. Provides the (R)-glutamate required for cell wall biosynthesis. The chain is Glutamate racemase from Geobacillus kaustophilus (strain HTA426).